Reading from the N-terminus, the 249-residue chain is Zinc import ATP-binding protein ZnuC (249 aa).

An ABC transporter domain is found at 1–219 (MRLVSLRNAT…PEYQALFGSG (219 aa)). 36–43 (GPNGSGKS) contributes to the ATP binding site.

It belongs to the ABC transporter superfamily. Zinc importer (TC 3.A.1.15.5) family. As to quaternary structure, the complex is composed of two ATP-binding proteins (ZnuC), two transmembrane proteins (ZnuB) and a solute-binding protein (ZnuA).

The protein localises to the cell inner membrane. The enzyme catalyses Zn(2+)(out) + ATP(in) + H2O(in) = Zn(2+)(in) + ADP(in) + phosphate(in) + H(+)(in). Part of the ABC transporter complex ZnuABC involved in zinc import. Responsible for energy coupling to the transport system. The polypeptide is Zinc import ATP-binding protein ZnuC (Ruegeria sp. (strain TM1040) (Silicibacter sp.)).